We begin with the raw amino-acid sequence, 340 residues long: Small ribosomal subunit biogenesis GTPase RsgA (340 aa).

Over residues 20–34 the composition is skewed to basic and acidic residues; it reads ERAERAERRARRDDT. The disordered stretch occupies residues 20–42; the sequence is ERAERAERRARRDDTSLDAGDYG. The 159-residue stretch at 116–274 folds into the CP-type G domain; the sequence is RGQLKPVAAN…LIDSPGIREF (159 aa). Residues 163–166 and 216–224 contribute to the GTP site; these read NKTD and GQSGVGKSS. Positions 298, 303, 305, and 311 each coordinate Zn(2+).

It belongs to the TRAFAC class YlqF/YawG GTPase family. RsgA subfamily. Monomer. Associates with 30S ribosomal subunit, binds 16S rRNA. Zn(2+) is required as a cofactor.

It is found in the cytoplasm. Its function is as follows. One of several proteins that assist in the late maturation steps of the functional core of the 30S ribosomal subunit. Helps release RbfA from mature subunits. May play a role in the assembly of ribosomal proteins into the subunit. Circularly permuted GTPase that catalyzes slow GTP hydrolysis, GTPase activity is stimulated by the 30S ribosomal subunit. The chain is Small ribosomal subunit biogenesis GTPase RsgA from Chromohalobacter salexigens (strain ATCC BAA-138 / DSM 3043 / CIP 106854 / NCIMB 13768 / 1H11).